Consider the following 68-residue polypeptide: Large ribosomal subunit protein bL31 (68 aa).

4 residues coordinate Zn(2+): C16, C18, C37, and C40.

Belongs to the bacterial ribosomal protein bL31 family. Type A subfamily. Part of the 50S ribosomal subunit. It depends on Zn(2+) as a cofactor.

Binds the 23S rRNA. The chain is Large ribosomal subunit protein bL31 from Nitrosococcus oceani (strain ATCC 19707 / BCRC 17464 / JCM 30415 / NCIMB 11848 / C-107).